The sequence spans 267 residues: 4-hydroxy-tetrahydrodipicolinate reductase (267 aa).

NAD(+) contacts are provided by residues 8–13 and aspartate 34; that span reads GAAGRM. Arginine 35 contacts NADP(+). NAD(+) contacts are provided by residues 98–100 and 122–125; these read GTT and AANF. The Proton donor/acceptor role is filled by histidine 155. Histidine 156 is a binding site for (S)-2,3,4,5-tetrahydrodipicolinate. Lysine 159 acts as the Proton donor in catalysis. 165–166 is a (S)-2,3,4,5-tetrahydrodipicolinate binding site; it reads GT.

This sequence belongs to the DapB family.

Its subcellular location is the cytoplasm. It catalyses the reaction (S)-2,3,4,5-tetrahydrodipicolinate + NAD(+) + H2O = (2S,4S)-4-hydroxy-2,3,4,5-tetrahydrodipicolinate + NADH + H(+). The enzyme catalyses (S)-2,3,4,5-tetrahydrodipicolinate + NADP(+) + H2O = (2S,4S)-4-hydroxy-2,3,4,5-tetrahydrodipicolinate + NADPH + H(+). It functions in the pathway amino-acid biosynthesis; L-lysine biosynthesis via DAP pathway; (S)-tetrahydrodipicolinate from L-aspartate: step 4/4. Its function is as follows. Catalyzes the conversion of 4-hydroxy-tetrahydrodipicolinate (HTPA) to tetrahydrodipicolinate. The protein is 4-hydroxy-tetrahydrodipicolinate reductase of Pseudomonas putida (strain W619).